The chain runs to 273 residues: MAIHLYKTSTPSTRNGAVDGQVKSNPRNNLIYGQHHCSKGRNARGIITARHRGGGHKRLYRKIDFRRNEKDISGRIVTIEYDPNRNAYICLIHYGDGEKRYILHPRGAIIGDTIVSGTEVPISMGNALPLTDMPLGTAIHNIEITLGKGGQLARAAGAVAKLIAKEGKSATLRLPSGEVRLISKNCSATVGQVGNVGVNQKSLGRAGSKRWLGKRPVVRGVVMNPVDHPHGGGEGRAPIGRKKPTTPWGYPALGRRSRKRNKYSDSFILRRRK.

The disordered stretch occupies residues 223–273 (MNPVDHPHGGGEGRAPIGRKKPTTPWGYPALGRRSRKRNKYSDSFILRRRK).

This sequence belongs to the universal ribosomal protein uL2 family. As to quaternary structure, part of the 50S ribosomal subunit.

It localises to the plastid. Its subcellular location is the chloroplast. The chain is Large ribosomal subunit protein uL2c (rpl2) from Calycanthus floridus var. glaucus (Eastern sweetshrub).